Here is a 183-residue protein sequence, read N- to C-terminus: dCTP deaminase, dUMP-forming (183 aa).

Residues 99–104 (KSSIAR), Asp-117, 125–127 (TLE), Gln-146, Tyr-159, Lys-166, and Gln-170 contribute to the dCTP site. The Proton donor/acceptor role is filled by Glu-127.

This sequence belongs to the dCTP deaminase family. Homotrimer.

The enzyme catalyses dCTP + 2 H2O = dUMP + NH4(+) + diphosphate. It participates in pyrimidine metabolism; dUMP biosynthesis; dUMP from dCTP: step 1/1. Bifunctional enzyme that catalyzes both the deamination of dCTP to dUTP and the hydrolysis of dUTP to dUMP without releasing the toxic dUTP intermediate. This is dCTP deaminase, dUMP-forming from Methanoregula boonei (strain DSM 21154 / JCM 14090 / 6A8).